The chain runs to 984 residues: Calsyntenin-1 (984 aa).

The signal sequence occupies residues 1-18 (MRTAYFIFVGALLGVSYA). Over 19–850 (KHHHAARAPI…VGQGAIAGGA (832 aa)) the chain is Extracellular. Cadherin domains lie at 66-142 (YLLT…APEI) and 143-257 (ENPW…APGV). Asparagine 206 and asparagine 305 each carry an N-linked (GlcNAc...) asparagine glycan. The helical transmembrane segment at 851–871 (VAVVVVVCVGFLLVLLVIGVL) threads the bilayer. Residues 872 to 984 (KMRDTPMPRR…ISTNARSYRV (113 aa)) lie on the Cytoplasmic side of the membrane. The segment at 878–959 (MPRRRRQKRQ…QTEVLPHLDA (82 aa)) is disordered. Residues 886–896 (RQSDGGMHWDD) show a composition bias toward basic and acidic residues. Over residues 918 to 951 (EFSDEEEEEETDGESECSYRDEEDDVSEDEEDQT) the composition is skewed to acidic residues.

This sequence belongs to the calsyntenin family. As to quaternary structure, interacts with isoform c of daf-2 (daf-2c); promoting daf-2c localization to synaptic regions. Interacts with klc-2. Interacts with unc-104. In terms of processing, a proportion of the protein is proteolytically cleaved before the transmembrane domain in neurons, leading to release in the extracellular space. In terms of tissue distribution, widely expressed in the nervous system. Highly expressed in many head neurons, including most amphid sensory neurons. Also expressed in other tissues, such as intestine and gonadal sheath cells.

The protein localises to the golgi apparatus membrane. It is found in the perikaryon. It localises to the cell projection. Its subcellular location is the axon. The protein resides in the secreted. The protein localises to the synaptic cleft. In terms of biological role, cell adhesion molecule involved in associative learning and memory. Acts as a regulator of GABAergic synaptic transmission at neuromuscular junctions by regulating GABA synaptic vesicle precursor transport: possibly functions as a cargo adapter for unc-104-mediated transport of synaptic vesicle precursors. Promotes localization of isoform c of daf-2 (daf-2c) to synaptic regions by acting as a signaling adapter between klc-2 and daf-2c. Acts as aregulator of glutamate signaling in the sensory neurons by inhibiting the activity of command interneurons, thereby negatively regulating motor circuit activity and locomotion. The protein is Calsyntenin-1 of Caenorhabditis elegans.